The following is a 210-amino-acid chain: Viral protein 1 (210 aa).

In Chaetoceros (Chaetoceros sp. DNA virus 7), this protein is Viral protein 1.